The primary structure comprises 78 residues: RNA-binding protein Hfq (78 aa).

The Sm domain occupies 10-69 (DPFLNALRKEHVPVSIYLVNGIKLQGNIESFDQYVVLLRNTVTQMVYKHAISTVVPARPV).

It belongs to the Hfq family. As to quaternary structure, homohexamer.

Its function is as follows. RNA chaperone that binds small regulatory RNA (sRNAs) and mRNAs to facilitate mRNA translational regulation in response to envelope stress, environmental stress and changes in metabolite concentrations. Also binds with high specificity to tRNAs. This chain is RNA-binding protein Hfq, found in Paraburkholderia phytofirmans (strain DSM 17436 / LMG 22146 / PsJN) (Burkholderia phytofirmans).